An 85-amino-acid polypeptide reads, in one-letter code: Large ribosomal subunit protein bL27 (85 aa).

The disordered stretch occupies residues 1 to 22 (MAHKKGQGSSRNGRDSPGQHRG).

Belongs to the bacterial ribosomal protein bL27 family.

In Anaeromyxobacter sp. (strain Fw109-5), this protein is Large ribosomal subunit protein bL27.